We begin with the raw amino-acid sequence, 29 residues long: MDIVSIAWAALMVVFTFSLSLVVWGRSGL.

A helical membrane pass occupies residues 3 to 23 (IVSIAWAALMVVFTFSLSLVV).

The protein belongs to the PetN family. The 4 large subunits of the cytochrome b6-f complex are cytochrome b6, subunit IV (17 kDa polypeptide, PetD), cytochrome f and the Rieske protein, while the 4 small subunits are PetG, PetL, PetM and PetN. The complex functions as a dimer.

Its subcellular location is the plastid. The protein localises to the chloroplast thylakoid membrane. Its function is as follows. Component of the cytochrome b6-f complex, which mediates electron transfer between photosystem II (PSII) and photosystem I (PSI), cyclic electron flow around PSI, and state transitions. The sequence is that of Cytochrome b6-f complex subunit 8 from Angiopteris evecta (Mule's foot fern).